Here is a 171-residue protein sequence, read N- to C-terminus: Shikimate kinase (171 aa).

An ATP-binding site is contributed by 13-18; the sequence is GVGKST. Serine 17 is a Mg(2+) binding site. Residues aspartate 35, arginine 59, and glycine 81 each contribute to the substrate site. Arginine 118 is a binding site for ATP. Position 136 (arginine 136) interacts with substrate. Arginine 153 lines the ATP pocket.

The protein belongs to the shikimate kinase family. Monomer. Mg(2+) is required as a cofactor.

It localises to the cytoplasm. It catalyses the reaction shikimate + ATP = 3-phosphoshikimate + ADP + H(+). It participates in metabolic intermediate biosynthesis; chorismate biosynthesis; chorismate from D-erythrose 4-phosphate and phosphoenolpyruvate: step 5/7. Catalyzes the specific phosphorylation of the 3-hydroxyl group of shikimic acid using ATP as a cosubstrate. In Streptomyces avermitilis (strain ATCC 31267 / DSM 46492 / JCM 5070 / NBRC 14893 / NCIMB 12804 / NRRL 8165 / MA-4680), this protein is Shikimate kinase.